A 401-amino-acid polypeptide reads, in one-letter code: Acetate kinase (401 aa).

Asn-9 provides a ligand contact to Mg(2+). Lys-16 provides a ligand contact to ATP. Arg-88 serves as a coordination point for substrate. The Proton donor/acceptor role is filled by Asp-147. ATP contacts are provided by residues 207-211 (HLGNG), 282-284 (DCR), and 333-337 (GIGEN). Glu-388 lines the Mg(2+) pocket.

Belongs to the acetokinase family. Homodimer. It depends on Mg(2+) as a cofactor. The cofactor is Mn(2+).

It localises to the cytoplasm. The catalysed reaction is acetate + ATP = acetyl phosphate + ADP. The protein operates within metabolic intermediate biosynthesis; acetyl-CoA biosynthesis; acetyl-CoA from acetate: step 1/2. In terms of biological role, catalyzes the formation of acetyl phosphate from acetate and ATP. Can also catalyze the reverse reaction. This chain is Acetate kinase, found in Haemophilus influenzae (strain ATCC 51907 / DSM 11121 / KW20 / Rd).